We begin with the raw amino-acid sequence, 358 residues long: G-protein coupled receptor 62 (358 aa).

The Extracellular segment spans residues 1 to 17; sequence MANGSGLSVTELAGSVG. N-linked (GlcNAc...) asparagine glycosylation is present at asparagine 3. Residues 18-38 form a helical membrane-spanning segment; that stretch reads FILAVLVEVGAVLGNGTLLVV. Residues 39-53 are Cytoplasmic-facing; that stretch reads VLRTPDLQDAFYLAH. Residues 54–74 traverse the membrane as a helical segment; sequence LCVVDLLAAASIMPLGLLAAP. Topologically, residues 75-89 are extracellular; it reads PGLGTVPLDPSSCRA. The chain crosses the membrane as a helical span at residues 90 to 110; it reads ARFLSAALLPACTLGVAALGL. Topologically, residues 111-128 are cytoplasmic; the sequence is ARYRLIVHPLRPGARPAP. A helical membrane pass occupies residues 129 to 149; the sequence is ALVLTAVWSAAALLGALSLLG. At 150–176 the chain is on the extracellular side; that stretch reads PPPAPPPAPARCSVLAGGLGPFRPLWA. A helical transmembrane segment spans residues 177–197; sequence MLAFALPALLLLAAYGSIFLV. Residues 198-234 lie on the Cytoplasmic side of the membrane; that stretch reads ARRAALRPPRGTRPRSDSLDSRLSFLPPLRPRLLGGK. A helical membrane pass occupies residues 235 to 255; sequence AALAPALAVGQFAACWLPYGC. At 256 to 268 the chain is on the extracellular side; it reads ACLAPAARAAAAE. The helical transmembrane segment at 269–289 threads the bilayer; that stretch reads ATVTWVAYSAFAAHPFLYGLL. Residues 290–358 lie on the Cytoplasmic side of the membrane; that stretch reads QRPVRLALGR…RQTPSVSEAT (69 aa). A disordered region spans residues 334–358; sequence VLGPSEAPEQARELARQTPSVSEAT.

Belongs to the G-protein coupled receptor 1 family. Homodimer. Forms heterodimer with MTNR1B. Interacts with ARRB1 and ARRB2 in a spontaneous and agonist-independent manner; leading to the internalization of GPR62 in the endosomal compartment. In terms of tissue distribution, expressed in the brain and testes. Expressed widely, in the brain, including the cerebral cortex, cerebellum, hippocampus,thalamus and pituitary gland. In the testes, expressed specifically in the germ cells.

The protein localises to the cell membrane. It is found in the endosome membrane. Orphan G-protein coupled receptor. Constitutively activates the G(q/11)/inositol phosphate and the G(s)-alpha/cAMP signaling pathways. Has spontaneous activity for beta-arrestin recruitment. Shows a reciprocal regulatory interaction with the melatonin receptor MTNR1B most likely through receptor heteromerization. This chain is G-protein coupled receptor 62 (Gpr62), found in Mus musculus (Mouse).